A 408-amino-acid chain; its full sequence is DNA primase DnaG (408 aa).

In terms of domain architecture, Toprim spans 166–241 (EEIIIVEGRA…KIDYIARAPP (76 aa)). Mg(2+)-binding residues include Glu-172, Asp-215, and Asp-217.

Belongs to the archaeal DnaG primase family. Forms a ternary complex with MCM helicase and DNA. Component of the archaeal exosome complex. Mg(2+) is required as a cofactor.

It catalyses the reaction ssDNA + n NTP = ssDNA/pppN(pN)n-1 hybrid + (n-1) diphosphate.. RNA polymerase that catalyzes the synthesis of short RNA molecules used as primers for DNA polymerase during DNA replication. Also part of the exosome, which is a complex involved in RNA degradation. Acts as a poly(A)-binding protein that enhances the interaction between heteromeric, adenine-rich transcripts and the exosome. The sequence is that of DNA primase DnaG from Desulfurococcus amylolyticus (strain DSM 18924 / JCM 16383 / VKM B-2413 / 1221n) (Desulfurococcus kamchatkensis).